Here is a 390-residue protein sequence, read N- to C-terminus: Large ribosomal subunit protein uL3y (390 aa).

Residues 1–36 (MSHRKFEHPRHGSLGFLPRKRASRHRGKVKAFPKDD) are disordered. The span at 18-31 (PRKRASRHRGKVKA) shows a compositional bias: basic residues.

This sequence belongs to the universal ribosomal protein uL3 family.

Its subcellular location is the cytoplasm. This chain is Large ribosomal subunit protein uL3y (ARP2), found in Arabidopsis thaliana (Mouse-ear cress).